Here is a 602-residue protein sequence, read N- to C-terminus: ATP-dependent DNA helicase XPD (602 aa).

One can recognise a Helicase ATP-binding domain in the interval 1–247; that stretch reads MQKSYGVALE…DLIEMIRSAL (247 aa). ATP is bound at residue 11–18; it reads SPTGSGKT. Positions 74, 95, 110, and 146 each coordinate [4Fe-4S] cluster. The DEAH box signature appears at 193–196; the sequence is DEAH. Residues 421 to 602 enclose the Helicase C-terminal domain; sequence VIEDIILKVK…SAQAREKYGA (182 aa). The ssDNA site is built by Trp-531 and Arg-566.

Belongs to the helicase family. RAD3/XPD subfamily. Monomer. Requires [4Fe-4S] cluster as cofactor.

The enzyme catalyses Couples ATP hydrolysis with the unwinding of duplex DNA at the replication fork by translocating in the 5'-3' direction. This creates two antiparallel DNA single strands (ssDNA). The leading ssDNA polymer is the template for DNA polymerase III holoenzyme which synthesizes a continuous strand.. The catalysed reaction is ATP + H2O = ADP + phosphate + H(+). ATP-dependent 5'-3' DNA helicase. Thought to be involved in nucleotide excision repair (NER) of DNA. This Thermoplasma acidophilum (strain ATCC 25905 / DSM 1728 / JCM 9062 / NBRC 15155 / AMRC-C165) protein is ATP-dependent DNA helicase XPD.